The following is a 573-amino-acid chain: Ribosomal RNA-processing protein 9 (573 aa).

The tract at residues 1 to 63 (MSDVTQQKKR…FEGENPADKR (63 aa)) is disordered. Position 2 is an N-acetylserine (serine 2). Residues 25-58 (DEEITDPSSNEDEQLEVSDEEDALESEEEFEGEN) are compositionally biased toward acidic residues. Residues 32-106 (SSNEDEQLEV…KERTIDEYNN (75 aa)) are a coiled coil. Serine 50 is subject to Phosphoserine. WD repeat units follow at residues 234–273 (GHYD…PVKV), 278–317 (DRRG…QLEI), 320–359 (GHHD…RLTF), 397–435 (FCEG…PIFT), 471–509 (QPFW…RSFE), and 516–562 (GAKG…ARNG).

The protein belongs to the WD repeat RRP9 family. As to quaternary structure, interacts with UTP25. Component of the ribosomal small subunit (SSU) processome composed of at least 40 protein subunits and snoRNA U3.

The protein resides in the nucleus. Its subcellular location is the nucleolus. Functionally, involved in nucleolar processing of pre-18S ribosomal RNA. Required for efficient pre-rRNA cleavage at sites A0, A1 and A2, and biosynthesis of 18S rRNA. This chain is Ribosomal RNA-processing protein 9 (RRP9), found in Saccharomyces cerevisiae (strain ATCC 204508 / S288c) (Baker's yeast).